The following is a 154-amino-acid chain: Myoglobin (154 aa).

Positions 2 to 148 (GLSDDEWNHV…FRNDMASKYK (147 aa)) constitute a Globin domain. His-65 provides a ligand contact to nitrite. O2 is bound at residue His-65. Residue His-94 participates in heme b binding.

This sequence belongs to the globin family. Monomeric.

The protein resides in the cytoplasm. Its subcellular location is the sarcoplasm. It carries out the reaction Fe(III)-heme b-[protein] + nitric oxide + H2O = Fe(II)-heme b-[protein] + nitrite + 2 H(+). The enzyme catalyses H2O2 + AH2 = A + 2 H2O. In terms of biological role, monomeric heme protein which primary function is to store oxygen and facilitate its diffusion within muscle tissues. Reversibly binds oxygen through a pentacoordinated heme iron and enables its timely and efficient release as needed during periods of heightened demand. Depending on the oxidative conditions of tissues and cells, and in addition to its ability to bind oxygen, it also has a nitrite reductase activity whereby it regulates the production of bioactive nitric oxide. Under stress conditions, like hypoxia and anoxia, it also protects cells against reactive oxygen species thanks to its pseudoperoxidase activity. This Caretta caretta (Loggerhead sea turtle) protein is Myoglobin (MB).